The chain runs to 267 residues: Tryptophan synthase alpha chain (267 aa).

Residues Glu-47 and Asp-58 each act as proton acceptor in the active site.

The protein belongs to the TrpA family. As to quaternary structure, tetramer of two alpha and two beta chains.

It catalyses the reaction (1S,2R)-1-C-(indol-3-yl)glycerol 3-phosphate + L-serine = D-glyceraldehyde 3-phosphate + L-tryptophan + H2O. It functions in the pathway amino-acid biosynthesis; L-tryptophan biosynthesis; L-tryptophan from chorismate: step 5/5. In terms of biological role, the alpha subunit is responsible for the aldol cleavage of indoleglycerol phosphate to indole and glyceraldehyde 3-phosphate. The polypeptide is Tryptophan synthase alpha chain (Chlorobaculum parvum (strain DSM 263 / NCIMB 8327) (Chlorobium vibrioforme subsp. thiosulfatophilum)).